The sequence spans 264 residues: Orotidine 5'-phosphate decarboxylase (264 aa).

Residues aspartate 40, 62–64 (KTH), 93–102 (DRKFADIGNT), tyrosine 214, and arginine 233 contribute to the substrate site. Lysine 95 acts as the Proton donor in catalysis.

The protein belongs to the OMP decarboxylase family.

The enzyme catalyses orotidine 5'-phosphate + H(+) = UMP + CO2. Its pathway is pyrimidine metabolism; UMP biosynthesis via de novo pathway; UMP from orotate: step 2/2. This Schizosaccharomyces pombe (strain 972 / ATCC 24843) (Fission yeast) protein is Orotidine 5'-phosphate decarboxylase (ura4).